We begin with the raw amino-acid sequence, 255 residues long: MDIIQVIVLSIIEGITEFLPISSTGHLIIVSNLMNLAQNAVQTNFEITIQLASIFAVCYEYREKFYNNLELWKKIIISFIPVGIMGLLFHKIVYQLFTVQIVATAFIVGGIIFLIVEKYYKEKEHNIKDLKDISYKQSLLIGIAQAFSLIPGTSRSGATIVGGMLCNLNRKTATEFSFLGALPVMLAASLFDIVKHHSELGSGDISNLVVGFIVSFFMALITIRLFLKYIEKYNFVPFGIYRILFGVILLMFFVR.

Transmembrane regions (helical) follow at residues 1 to 21 (MDII…FLPI), 75 to 95 (IIIS…IVYQ), 96 to 116 (LFTV…FLIV), 174 to 194 (TEFS…FDIV), 203 to 223 (GDIS…LITI), and 234 to 254 (NFVP…MFFV).

Belongs to the UppP family.

It is found in the cell membrane. It catalyses the reaction di-trans,octa-cis-undecaprenyl diphosphate + H2O = di-trans,octa-cis-undecaprenyl phosphate + phosphate + H(+). Functionally, catalyzes the dephosphorylation of undecaprenyl diphosphate (UPP). The chain is Undecaprenyl-diphosphatase from Methanococcus aeolicus (strain ATCC BAA-1280 / DSM 17508 / OCM 812 / Nankai-3).